Here is a 371-residue protein sequence, read N- to C-terminus: tRNA-specific 2-thiouridylase MnmA (371 aa).

Residues 12–19 and Met38 each bind ATP; that span reads GMSGGVDS. The interaction with target base in tRNA stretch occupies residues 98 to 100; that stretch reads NPD. Cys103 functions as the Nucleophile in the catalytic mechanism. A disulfide bridge links Cys103 with Cys200. Gly127 is an ATP binding site. An interaction with tRNA region spans residues 150–152; it reads KDQ. Cys200 serves as the catalytic Cysteine persulfide intermediate. The tract at residues 308–309 is interaction with tRNA; that stretch reads RY.

Belongs to the MnmA/TRMU family.

It is found in the cytoplasm. The enzyme catalyses S-sulfanyl-L-cysteinyl-[protein] + uridine(34) in tRNA + AH2 + ATP = 2-thiouridine(34) in tRNA + L-cysteinyl-[protein] + A + AMP + diphosphate + H(+). Catalyzes the 2-thiolation of uridine at the wobble position (U34) of tRNA, leading to the formation of s(2)U34. This Oceanobacillus iheyensis (strain DSM 14371 / CIP 107618 / JCM 11309 / KCTC 3954 / HTE831) protein is tRNA-specific 2-thiouridylase MnmA.